We begin with the raw amino-acid sequence, 208 residues long: Uracil phosphoribosyltransferase (208 aa).

Residues R78, R103, and 130–138 each bind 5-phospho-alpha-D-ribose 1-diphosphate; that span reads DPMLATGGS. Uracil contacts are provided by residues I193 and 198–200; that span reads GDA. Position 199 (D199) interacts with 5-phospho-alpha-D-ribose 1-diphosphate.

It belongs to the UPRTase family. Mg(2+) is required as a cofactor.

It catalyses the reaction UMP + diphosphate = 5-phospho-alpha-D-ribose 1-diphosphate + uracil. It functions in the pathway pyrimidine metabolism; UMP biosynthesis via salvage pathway; UMP from uracil: step 1/1. Its activity is regulated as follows. Allosterically activated by GTP. Its function is as follows. Catalyzes the conversion of uracil and 5-phospho-alpha-D-ribose 1-diphosphate (PRPP) to UMP and diphosphate. The chain is Uracil phosphoribosyltransferase from Shewanella piezotolerans (strain WP3 / JCM 13877).